A 194-amino-acid polypeptide reads, in one-letter code: Thymidylate kinase (194 aa).

Residue 7-14 (GVDGVGKS) participates in ATP binding.

The protein belongs to the thymidylate kinase family.

It catalyses the reaction dTMP + ATP = dTDP + ADP. Functionally, phosphorylation of dTMP to form dTDP in both de novo and salvage pathways of dTTP synthesis. The polypeptide is Thymidylate kinase (Campylobacter curvus (strain 525.92)).